Consider the following 277-residue polypeptide: Shikimate dehydrogenase (NADP(+)) (277 aa).

Residues 14–16 and Thr61 each bind shikimate; that span reads SKS. Lys65 serves as the catalytic Proton acceptor. Asp77 contacts NADP(+). Shikimate-binding residues include Asn86 and Asp102. NADP(+) is bound by residues 127–131, 151–156, and Met215; these read GAGGA and NRTPDK. Tyr217 serves as a coordination point for shikimate. Gly239 is a binding site for NADP(+).

It belongs to the shikimate dehydrogenase family. In terms of assembly, homodimer.

It carries out the reaction shikimate + NADP(+) = 3-dehydroshikimate + NADPH + H(+). It participates in metabolic intermediate biosynthesis; chorismate biosynthesis; chorismate from D-erythrose 4-phosphate and phosphoenolpyruvate: step 4/7. In terms of biological role, involved in the biosynthesis of the chorismate, which leads to the biosynthesis of aromatic amino acids. Catalyzes the reversible NADPH linked reduction of 3-dehydroshikimate (DHSA) to yield shikimate (SA). The sequence is that of Shikimate dehydrogenase (NADP(+)) from Nitrosomonas eutropha (strain DSM 101675 / C91 / Nm57).